Here is a 297-residue protein sequence, read N- to C-terminus: Transcription factor PCF8 (297 aa).

Positions 1-22 are disordered; it reads MEEVVGGGKERKRPRGALVGVG. In terms of domain architecture, TCP spans 46–104; that stretch reads GKDRHSKVVTSRGLRDRRVRLSVPTAIAFYDIQDRLGVDQPSKAIEWLIRAAAAAIDAL. Disordered regions lie at residues 116–136 and 273–297; these read AASS…SETS and AAPA…ERKT. Over residues 282-297 the composition is skewed to basic and acidic residues; it reads GERRLQLWDFKEERKT.

As to quaternary structure, forms homodimers and heterodimers.

Its subcellular location is the nucleus. Functionally, transcription activator. Binds the promoter core sequence 5'-GGNCC-3'. The sequence is that of Transcription factor PCF8 (PCF8) from Oryza sativa subsp. indica (Rice).